A 335-amino-acid chain; its full sequence is AKTTAPSVYPLVPVCGGTTGSSVTLGCLVKGYFPEPVTLTWNSGSLSSGVHTFPALLQSGLYTLSSSVTVTSNTWPSQTITCNVAHPASSTKVDKKIEPRVPITQNPCPPHQRVPPCAAPDLLGGPSVFIFPPKIKDVLMISLSPMVTCVVVDVSEDDPDVQISWFVNNVEVHTAQTQTHREDYNSTLRVVSALPIQHQDWMSGKEFKCKVNNRALPSPIEKTISKPRGPVRAPQVYVLPPPAEEMTKKEFSLTCMITGFLPAEIAVDWTSNGRTEQNYKNTATVLDSDGSYFMYSKLRVQKSTWERGSLFACSVVHEVLHNHLTTKTISRSLGK.

3 Ig-like domains span residues 6-98, 126-225, and 234-330; these read PSVY…KKIE, PSVF…KTIS, and PQVY…KTIS. A glycan (N-linked (GlcNAc...) asparagine) is linked at asparagine 185.

The protein resides in the secreted. The chain is Ig gamma-2A chain C region secreted form from Mus musculus (Mouse).